A 397-amino-acid chain; its full sequence is Tryptophan synthase beta chain (397 aa).

The residue at position 87 (Lys87) is an N6-(pyridoxal phosphate)lysine.

It belongs to the TrpB family. Tetramer of two alpha and two beta chains. Pyridoxal 5'-phosphate is required as a cofactor.

It carries out the reaction (1S,2R)-1-C-(indol-3-yl)glycerol 3-phosphate + L-serine = D-glyceraldehyde 3-phosphate + L-tryptophan + H2O. Its pathway is amino-acid biosynthesis; L-tryptophan biosynthesis; L-tryptophan from chorismate: step 5/5. The beta subunit is responsible for the synthesis of L-tryptophan from indole and L-serine. This chain is Tryptophan synthase beta chain, found in Escherichia coli O45:K1 (strain S88 / ExPEC).